The chain runs to 574 residues: Septation ring formation regulator EzrA (574 aa).

The Extracellular segment spans residues 1–7 (MSNGLII). A helical transmembrane segment spans residues 8-26 (LIIVIAVALILAYVAAVVL). Topologically, residues 27 to 574 (RKRNETLLDS…YEKTRENIRF (548 aa)) are cytoplasmic. Coiled coils occupy residues 104 to 141 (LKAKHAIDSIESQINLVEEDIELIREALADLEKQEAKN), 267 to 424 (NITQ…QKVN), and 456 to 524 (ASDH…SIQE).

This sequence belongs to the EzrA family.

The protein localises to the cell membrane. In terms of biological role, negative regulator of FtsZ ring formation; modulates the frequency and position of FtsZ ring formation. Inhibits FtsZ ring formation at polar sites. Interacts either with FtsZ or with one of its binding partners to promote depolymerization. The sequence is that of Septation ring formation regulator EzrA from Streptococcus gordonii (strain Challis / ATCC 35105 / BCRC 15272 / CH1 / DL1 / V288).